We begin with the raw amino-acid sequence, 251 residues long: Ubiquinone/menaquinone biosynthesis C-methyltransferase UbiE (251 aa).

Residues T74, D95, and 123-124 (NA) each bind S-adenosyl-L-methionine.

The protein belongs to the class I-like SAM-binding methyltransferase superfamily. MenG/UbiE family.

It catalyses the reaction a 2-demethylmenaquinol + S-adenosyl-L-methionine = a menaquinol + S-adenosyl-L-homocysteine + H(+). The enzyme catalyses a 2-methoxy-6-(all-trans-polyprenyl)benzene-1,4-diol + S-adenosyl-L-methionine = a 5-methoxy-2-methyl-3-(all-trans-polyprenyl)benzene-1,4-diol + S-adenosyl-L-homocysteine + H(+). Its pathway is quinol/quinone metabolism; menaquinone biosynthesis; menaquinol from 1,4-dihydroxy-2-naphthoate: step 2/2. It participates in cofactor biosynthesis; ubiquinone biosynthesis. Functionally, methyltransferase required for the conversion of demethylmenaquinol (DMKH2) to menaquinol (MKH2) and the conversion of 2-polyprenyl-6-methoxy-1,4-benzoquinol (DDMQH2) to 2-polyprenyl-3-methyl-6-methoxy-1,4-benzoquinol (DMQH2). This is Ubiquinone/menaquinone biosynthesis C-methyltransferase UbiE from Shewanella putrefaciens (strain CN-32 / ATCC BAA-453).